The sequence spans 327 residues: Undecaprenyl-phosphate 4-deoxy-4-formamido-L-arabinose transferase (327 aa).

2 helical membrane passes run 235–255 (LLSL…VLLV) and 270–290 (VFTL…GMGL).

It belongs to the glycosyltransferase 2 family.

The protein resides in the cell inner membrane. It carries out the reaction UDP-4-deoxy-4-formamido-beta-L-arabinose + di-trans,octa-cis-undecaprenyl phosphate = 4-deoxy-4-formamido-alpha-L-arabinopyranosyl di-trans,octa-cis-undecaprenyl phosphate + UDP. The protein operates within glycolipid biosynthesis; 4-amino-4-deoxy-alpha-L-arabinose undecaprenyl phosphate biosynthesis; 4-amino-4-deoxy-alpha-L-arabinose undecaprenyl phosphate from UDP-4-deoxy-4-formamido-beta-L-arabinose and undecaprenyl phosphate: step 1/2. It participates in bacterial outer membrane biogenesis; lipopolysaccharide biosynthesis. Functionally, catalyzes the transfer of 4-deoxy-4-formamido-L-arabinose from UDP to undecaprenyl phosphate. The modified arabinose is attached to lipid A and is required for resistance to polymyxin and cationic antimicrobial peptides. The sequence is that of Undecaprenyl-phosphate 4-deoxy-4-formamido-L-arabinose transferase from Yersinia pestis bv. Antiqua (strain Antiqua).